A 207-amino-acid polypeptide reads, in one-letter code: Cytochrome c oxidase subunit 3 (207 aa).

5 helical membrane passes run 30–50, 67–87, 101–121, 144–164, and 186–206; these read FWLF…TFLA, VTLV…SVYA, LWLG…IYEF, LVGT…TLMI, and WHFI…MGMV.

It belongs to the cytochrome c oxidase subunit 3 family.

It localises to the cell membrane. It carries out the reaction 4 Fe(II)-[cytochrome c] + O2 + 8 H(+)(in) = 4 Fe(III)-[cytochrome c] + 2 H2O + 4 H(+)(out). This chain is Cytochrome c oxidase subunit 3 (ctaE), found in Bacillus subtilis (strain 168).